A 470-amino-acid chain; its full sequence is FRIGIDA-like protein 1 (470 aa).

The stretch at 336–369 (KDQNLESEFTQEKVEERVEELEKNKALRKRNTTN) forms a coiled coil. Positions 355 to 400 (ELEKNKALRKRNTTNPPKQEPQQKGKKRTRDCKNGSQVPVPSQQLL) are disordered. Polar residues predominate over residues 388-400 (NGSQVPVPSQQLL).

It belongs to the Frigida family. Component of the transcription activator complex FRI-C composed of FRI, FRL1, SUF4, FLX and FES1. Interacts with FRI and SUF4. As to expression, expressed during seed development and in dry seed. Preferentially expressed in the chalazal endosperm during early stages of seed development.

Required for FRI-mediated up-regulation of FLC transcripts, but not redundant with FRI and only partially redundant with FRL2. Required for the stabilization of the FRI-C complex. The polypeptide is FRIGIDA-like protein 1 (FRL1) (Arabidopsis thaliana (Mouse-ear cress)).